The primary structure comprises 196 residues: Ribosome maturation factor RimP (196 aa).

Residues Leu-164–Glu-196 are disordered. Over residues Gly-173–Lys-182 the composition is skewed to basic residues.

It belongs to the RimP family.

Its subcellular location is the cytoplasm. In terms of biological role, required for maturation of 30S ribosomal subunits. This is Ribosome maturation factor RimP from Xanthomonas axonopodis pv. citri (strain 306).